A 92-amino-acid polypeptide reads, in one-letter code: MATTMRLDKYLKVSRLIKRRTVAKEVAEKGRIAVNGVTAKPGTNVKSGDELVIRFGPKIVTAKIERLEENAKKEQATEMYTIIKEERTDESR.

The S4 RNA-binding domain maps to 5 to 65 (MRLDKYLKVS…GPKIVTAKIE (61 aa)).

The protein belongs to the RqcP family. Associates with stalled 50S ribosomal subunits. Binds to RqcH, 23S rRNA and the P-site tRNA. Does not require RqcH for association with 50S subunits.

Its function is as follows. Key component of the ribosome quality control system (RQC), a ribosome-associated complex that mediates the extraction of incompletely synthesized nascent chains from stalled ribosomes and their subsequent degradation. RqcH recruits Ala-charged tRNA, and with RqcP directs the elongation of stalled nascent chains on 50S ribosomal subunits, leading to non-templated C-terminal alanine extensions (Ala tail). The Ala tail promotes nascent chain degradation. RqcP is associated with the translocation-like movement of the peptidyl-tRNA from the A-site into the P-site. This is RQC P-site tRNA stabilizing factor from Listeria monocytogenes serovar 1/2a (strain ATCC BAA-679 / EGD-e).